The sequence spans 741 residues: Zinc finger protein 425 (741 aa).

One can recognise a KRAB domain in the interval 1–69 (DDVALYFSGQ…EQGCLDKTRR (69 aa)). Disordered stretches follow at residues 67 to 86 (TRRTTSPPTDEQLDMKDTGK) and 128 to 169 (RRDT…TPGR). Residues 132–151 (FQSPSLQETEIPNKKVSITA) are compositionally biased toward polar residues. The span at 153 to 168 (DPDKKDLRHKPRETPG) shows a compositional bias: basic and acidic residues. 19 consecutive C2H2-type zinc fingers follow at residues 179 to 201 (YSCYVCRKVFQVRRDLLKHKRSH), 235 to 257 (FQCSECEKSYFLKGSLVTHQVVH), 263 to 285 (YPCPECDKTFRYRANLKKHLCLH), 291 to 313 (FCCGECGRAFVQQCELTEHLRLH), 319 to 341 (FQCPQCDRCFRLKRGMKVHLSQH), 347 to 369 (FHCPECGRSFSRKAALKTHQRTH), 375 to 397 (FSCDECGRKFIYKIKLDEHIRVH), 403 to 425 (FSCPECNKSFRLKRSLKAHGLQH), 431 to 453 (FQCPECSRGFFWRNAMRAHQRLH), 459 to 481 (FPCAECGKRFTRPSKLACHTRVH), 487 to 509 (FPCGECKKTFSQQSRLTQHLKVH), 515 to 537 (FSCAECGRSFRRRAHLTEHTRLH), 543 to 565 (FQCPECDKSFSWKASMKFHQRMH), 571 to 593 (FACSECGKTYTHQSQLTEHLRLH), 599 to 621 (YQCPECQKTFRLKGNLKSHLLQH), 627 to 649 (FSCVMCGKSFTQQYRLTEHIRVH), 655 to 677 (FQCPECDKSYCIRGSLKVHLYTH), 683 to 705 (FQCPECGKGFLQKRSLKAHLCLH), and 711 to 733 (FSCDECGRSFTYVGALKTHIAVH).

Belongs to the krueppel C2H2-type zinc-finger protein family.

The protein resides in the nucleus. It localises to the cytoplasm. In terms of biological role, acts as a transcriptional repressor. In Macaca fascicularis (Crab-eating macaque), this protein is Zinc finger protein 425 (ZNF425).